Here is a 226-residue protein sequence, read N- to C-terminus: V-type proton ATPase subunit E 2 (226 aa).

It belongs to the V-ATPase E subunit family. As to quaternary structure, V-ATPase is a heteromultimeric enzyme made up of two complexes: the ATP-hydrolytic V1 complex and the proton translocation V0 complex. The V1 complex consists of three catalytic AB heterodimers that form a heterohexamer, three peripheral stalks each consisting of EG heterodimers, one central rotor including subunits D and F, and the regulatory subunits C and H. The proton translocation complex V0 consists of the proton transport subunit a, a ring of proteolipid subunits c9c'', rotary subunit d, subunits e and f, and the accessory subunits ATP6AP1/Ac45 and ATP6AP2/PRR.

In terms of biological role, subunit of the V1 complex of vacuolar(H+)-ATPase (V-ATPase), a multisubunit enzyme composed of a peripheral complex (V1) that hydrolyzes ATP and a membrane integral complex (V0) that translocates protons. V-ATPase is responsible for acidifying and maintaining the pH of intracellular compartments and in some cell types, is targeted to the plasma membrane, where it is responsible for acidifying the extracellular environment. This Bos taurus (Bovine) protein is V-type proton ATPase subunit E 2 (ATP6V1E2).